The chain runs to 151 residues: 1,4-dihydroxy-2-naphthoyl-CoA hydrolase (151 aa).

Residue Asp19 is part of the active site.

It belongs to the 4-hydroxybenzoyl-CoA thioesterase family. DHNA-CoA hydrolase subfamily.

The enzyme catalyses 1,4-dihydroxy-2-naphthoyl-CoA + H2O = 1,4-dihydroxy-2-naphthoate + CoA + H(+). It functions in the pathway cofactor biosynthesis; phylloquinone biosynthesis. Its pathway is quinol/quinone metabolism; 1,4-dihydroxy-2-naphthoate biosynthesis; 1,4-dihydroxy-2-naphthoate from chorismate: step 7/7. In terms of biological role, catalyzes the hydrolysis of 1,4-dihydroxy-2-naphthoyl-CoA (DHNA-CoA) to 1,4-dihydroxy-2-naphthoate (DHNA), a reaction involved in phylloquinone (vitamin K1) biosynthesis. In Prochlorococcus marinus (strain MIT 9313), this protein is 1,4-dihydroxy-2-naphthoyl-CoA hydrolase.